We begin with the raw amino-acid sequence, 70 residues long: DNA gyrase inhibitor YacG (70 aa).

Positions 21, 24, 36, and 40 each coordinate Zn(2+).

It belongs to the DNA gyrase inhibitor YacG family. Interacts with GyrB. Zn(2+) serves as cofactor.

Inhibits all the catalytic activities of DNA gyrase by preventing its interaction with DNA. Acts by binding directly to the C-terminal domain of GyrB, which probably disrupts DNA binding by the gyrase. The protein is DNA gyrase inhibitor YacG of Sinorhizobium medicae (strain WSM419) (Ensifer medicae).